Here is a 546-residue protein sequence, read N- to C-terminus: Casein kinase I homolog 2 (546 aa).

2 stretches are compositionally biased toward polar residues: residues 1–33 (MSQV…SNVR) and 44–55 (HVSSNLNHNTGN). The disordered stretch occupies residues 1 to 67 (MSQVQSPLTA…ASYSGSQSRD (67 aa)). S2 carries the N-acetylserine modification. The region spanning 76–360 (YKIGKKIGEG…ETADGQYDWM (285 aa)) is the Protein kinase domain. Residues 82 to 90 (IGEGSFGVL) and K105 contribute to the ATP site. The active-site Proton acceptor is the D195. Disordered stretches follow at residues 373–425 (NKKP…QAQA) and 443–546 (QQAN…LGCC). Positions 412-425 (QQQQQQQAQAQAQA) are enriched in low complexity. Residues 453–465 (DDSHYDEEREASK) show a composition bias toward basic and acidic residues. S455 carries the phosphoserine modification. Residue K465 forms a Glycyl lysine isopeptide (Lys-Gly) (interchain with G-Cter in ubiquitin) linkage. The segment covering 475–496 (QQQTQQKYAQQQQKQMQQKSKQ) has biased composition (low complexity). The segment covering 497-530 (FANTGANGQTNKYPYNAQPTANDEQNAKNAAQDR) has biased composition (polar residues). Over residues 533–546 (NKSSKGFFSKLGCC) the composition is skewed to low complexity. Residues C545 and C546 are each lipidated (S-palmitoyl cysteine).

The protein belongs to the protein kinase superfamily. CK1 Ser/Thr protein kinase family. Casein kinase I subfamily. In terms of processing, palmitoylated by AKR1, which is required for proper plasma membrane localization of YCK2.

It is found in the cell membrane. It catalyses the reaction L-seryl-[protein] + ATP = O-phospho-L-seryl-[protein] + ADP + H(+). The catalysed reaction is L-threonyl-[protein] + ATP = O-phospho-L-threonyl-[protein] + ADP + H(+). Casein kinases are operationally defined by their preferential utilization of acidic proteins such as caseins as substrates. The chain is Casein kinase I homolog 2 (YCK2) from Saccharomyces cerevisiae (strain ATCC 204508 / S288c) (Baker's yeast).